Consider the following 257-residue polypeptide: UPF0246 protein RSc2009 (257 aa).

It belongs to the UPF0246 family.

The sequence is that of UPF0246 protein RSc2009 from Ralstonia nicotianae (strain ATCC BAA-1114 / GMI1000) (Ralstonia solanacearum).